The sequence spans 349 residues: Mitochondrial carrier protein SCaMC-3L (349 aa).

Transmembrane regions (helical) follow at residues Gly-88–Ser-104, Gly-149–Phe-168, Leu-188–Met-205, and Tyr-243–Tyr-261. Solcar repeat units follow at residues Gly-88–Tyr-174 and Pro-182–Leu-267.

The protein belongs to the mitochondrial carrier (TC 2.A.29) family.

It localises to the mitochondrion inner membrane. The enzyme catalyses Mg(2+)(out) + phosphate(in) + ATP(out) = Mg(2+)(in) + phosphate(out) + ATP(in). It catalyses the reaction ADP(out) + phosphate(in) + H(+)(out) = ADP(in) + phosphate(out) + H(+)(in). Its function is as follows. Calcium-independent ATP-Mg/Pi exchanger that catalyzes the electroneutral exchange of Mg-ATP or free ADP against an hydrogenphosphate and participates in the net transport of adenine nucleotides across the mitochondria inner membrane. This is Mitochondrial carrier protein SCaMC-3L from Bos taurus (Bovine).